A 200-amino-acid chain; its full sequence is Ras-related protein RABF2a (200 aa).

17 to 25 contributes to the GTP binding site; it reads GDVGAGKSS. The short motif at 39 to 47 is the Effector region element; it reads QESTIGAAF. GTP-binding positions include 65 to 69, 123 to 126, and 153 to 154; these read DTAGQ, NKAD, and SA. Residues Cys198 and Cys199 are each lipidated (S-geranylgeranyl cysteine).

It belongs to the small GTPase superfamily. Rab family. Interacts with VPS9A. Interacts with EREX (via PX domain). Binds to VPS3. High in stem, root, and inflorescence.

It localises to the endosome membrane. The protein resides in the prevacuolar compartment membrane. Involved in the trafficking of soluble cargo proteins from the prevacuolar compartment to the central vacuole. Involved in vacuolar transport of storage proteins with EREX as effector. Regulates membrane trafficking to protein storage vacuoles (PSVs). This is Ras-related protein RABF2a (RABF2A) from Arabidopsis thaliana (Mouse-ear cress).